We begin with the raw amino-acid sequence, 494 residues long: Ribitol 5-phosphate transferase FKRP (494 aa).

The Cytoplasmic segment spans residues 1–6 (MRLTRC). A helical transmembrane segment spans residues 7–29 (WAALAAAIILNLLVFFYVSWLQH). Residues 30–494 (QPRNSRARGP…NPALLSLTGG (465 aa)) are Lumenal-facing. An intrachain disulfide couples Cys168 to Cys191. Asn172 and Asn209 each carry an N-linked (GlcNAc...) asparagine glycan. Positions 289, 296, 317, and 318 each coordinate Zn(2+). The zinc finger loop stretch occupies residues 289–318 (CSKESARCFGTVAGDTPAYLYEGRWTPPCC). CDP-L-ribitol contacts are provided by Gly345 and Arg352. CDP-L-ribitol regions lie at residues 359 to 364 (WDYDVD), 437 to 438 (QD), and 480 to 482 (NPE). Asp360, Asp362, and Asp364 together coordinate Mg(2+).

The protein belongs to the LicD transferase family. Homodimer; disulfide-linked. Forms a complex composed of FKRP, FKTN/fukutin, and RXYLT1/TMEM5. Also exists as large multimeric protein complexes. May interact with the dystrophin-glycoprotein complex (DGC). N-glycosylated. As to expression, expressed in the retina, specifically in the inner segments of the photoreceptors, the outer plexiform layers, inner nuclear layers, and ganglion cell layers (at protein level). Expressed at highest levels in brain, lung, heart, kidney and liver.

Its subcellular location is the golgi apparatus membrane. It is found in the secreted. It localises to the cell membrane. The protein resides in the sarcolemma. The protein localises to the rough endoplasmic reticulum. Its subcellular location is the cytoplasm. It catalyses the reaction 3-O-[Rib-ol-P-3-beta-D-GalNAc-(1-&gt;3)-beta-D-GlcNAc-(1-&gt;4)-(O-6-P-alpha-D-Man)]-Thr-[protein] + CDP-L-ribitol = 3-O-[Rib-ol-P-Rib-ol-P-3-beta-D-GalNAc-(1-&gt;3)-beta-D-GlcNAc-(1-&gt;4)-(O-6-P-alpha-D-Man)]-Thr-[protein] + CMP + H(+). It functions in the pathway protein modification; protein glycosylation. In terms of biological role, catalyzes the transfer of CDP-ribitol to ribitol 5-phosphate previously attached by FKTN/fukutin of to the phosphorylated O-mannosyl trisaccharide (N-acetylgalactosamine-beta-3-N-acetylglucosamine-beta-4-(phosphate-6-)mannose), a carbohydrate structure present in alpha-dystroglycan (DAG1). This constitutes the second step in the formation of the ribose 5-phosphate tandem repeat which links the phosphorylated O-mannosyl trisaccharide to the ligand binding moiety composed of repeats of 3-xylosyl-alpha-1,3-glucuronic acid-beta-1. The protein is Ribitol 5-phosphate transferase FKRP of Mus musculus (Mouse).